Consider the following 589-residue polypeptide: Kelch-like protein 25 (589 aa).

The BTB domain occupies 46 to 114 (TDVTLWAGDR…AYSSRIAINE (69 aa)). Positions 149–250 (CLGMMLLSDA…LPSDCLQEAV (102 aa)) constitute a BACK domain. 6 Kelch repeats span residues 296 to 340 (TLLI…AIGC), 341 to 388 (KVYV…ELEN), 389 to 444 (CLYV…SAKL), 446 to 492 (LFVF…VLGS), 494 to 538 (IFIM…ASGN), and 539 to 585 (KLYV…STWK).

Component of the BCR(KLHL25) E3 ubiquitin ligase complex, at least composed of CUL3, KLHL25 and RBX1.

It functions in the pathway protein modification; protein ubiquitination. Substrate-specific adapter of a BCR (BTB-CUL3-RBX1) E3 ubiquitin ligase complex involved in various processes, such as translation homeostasis and lipid synthesis. The BCR(KLHL25) ubiquitin ligase complex acts by mediating ubiquitination of hypophosphorylated EIF4EBP1 (4E-BP1): ubiquitination and subsequent degradation of hypophosphorylated EIF4EBP1 (4E-BP1) probably serves as a homeostatic mechanism to maintain translation and prevent eIF4E inhibition when eIF4E levels are low. The BCR(KLHL25) complex does not target EIF4EBP1 (4E-BP1) when it is hyperphosphorylated or associated with eIF4E. The BCR(KLHL25) complex also acts as a regulator of lipid synthesis by mediating ubiquitination and degradation of ACLY, thereby inhibiting lipid synthesis. BCR(KLHL25)-mediated degradation of ACLY promotes fatty acid oxidation and is required for differentiation of inducible regulatory T (iTreg) cells. This chain is Kelch-like protein 25, found in Homo sapiens (Human).